Here is a 676-residue protein sequence, read N- to C-terminus: MKQPLLALQLLKLLLLLLLPLPPLPRALREARCCPEPCNCTPDGALRCPGPGAGLTRLSLAYLPVKVIPSQAFRGLNEVIKIEISQSDSLERIEANAFDNLLNLSEILIQNTKNLIHIEPGAFTNLPRLKYLSICNTGIRKFPDVTKIFSSETNFILEICDNLHITTIPGNAFQGMNNESITLKLYGNGFEEVQSHAFNGTTVISLVLKENVHLERIHNGAFRGATGPSILDISSTKLQALPSHGLESIQTLIATSSYSLKKLPSREKFANLLDATLTYPSHCCAFRNVPTKDYPAIFAESGQSGWDYDYGFHLPKTPRCAPEPDAFNPCEDIMGYDFLRVLIWLINILAIMGNMTVLFVLLTSRYKLTVPRFLMCNLSFADFCMGLYLLLIASVDSQTKGQYYNHAIDWQTGSGCNTAGFFTVFASELSVYTLTVITLERWHTITYAIHLDQKLRLRHAILIMLGGWLFSSLIAMLPLVGVSNYMKVSICFPMDVETTLSQIYILTILILNVVAFIIICACYIKIYFAVRNPELMATNKDTKIAKKMAILIFTDFTCMAPISFFAISAAFKMPLITVTNSKVLLVLFYPINSCANPFLYAIFTKTFRRDFFLLLGKFGCCKHRAELYRRKDFSAYTSNYKNGFTGSSKPSQSTLKLPALHCQGTALLDKTCYKEY.

A signal peptide spans 1-29; it reads MKQPLLALQLLKLLLLLLLPLPPLPRALR. At 30–340 the chain is on the extracellular side; sequence EARCCPEPCN…EDIMGYDFLR (311 aa). Residue N103 is glycosylated (N-linked (GlcNAc...) asparagine). 5 LRR repeats span residues 126-151, 153-175, 176-200, 201-224, and 225-248; these read LPRL…IFSS, TNFI…AFQG, MNNE…AFNG, TTVI…AFRG, and ATGP…GLES. 2 N-linked (GlcNAc...) asparagine glycosylation sites follow: N178 and N199. Y308 bears the Sulfotyrosine mark. Residues 341–362 form a helical membrane-spanning segment; the sequence is VLIWLINILAIMGNMTVLFVLL. At 363-372 the chain is on the cytoplasmic side; that stretch reads TSRYKLTVPR. The helical transmembrane segment at 373–393 threads the bilayer; it reads FLMCNLSFADFCMGLYLLLIA. The Extracellular segment spans residues 394–416; that stretch reads SVDSQTKGQYYNHAIDWQTGSGC. C416 and C491 are oxidised to a cystine. A helical membrane pass occupies residues 417–439; the sequence is NTAGFFTVFASELSVYTLTVITL. Topologically, residues 440 to 459 are cytoplasmic; it reads ERWHTITYAIHLDQKLRLRH. Residues 460 to 482 form a helical membrane-spanning segment; sequence AILIMLGGWLFSSLIAMLPLVGV. The Extracellular segment spans residues 483 to 502; it reads SNYMKVSICFPMDVETTLSQ. The chain crosses the membrane as a helical span at residues 503–526; the sequence is IYILTILILNVVAFIIICACYIKI. The Cytoplasmic portion of the chain corresponds to 527–547; that stretch reads YFAVRNPELMATNKDTKIAKK. A helical membrane pass occupies residues 548–571; it reads MAILIFTDFTCMAPISFFAISAAF. Over 572–582 the chain is Extracellular; sequence KMPLITVTNSK. Residues 583-604 form a helical membrane-spanning segment; sequence VLLVLFYPINSCANPFLYAIFT. The Cytoplasmic segment spans residues 605–676; the sequence is KTFRRDFFLL…LLDKTCYKEY (72 aa). Residues C620 and C621 are each lipidated (S-palmitoyl cysteine).

Belongs to the G-protein coupled receptor 1 family. FSH/LSH/TSH subfamily. In terms of processing, sulfated.

The protein resides in the cell membrane. Its function is as follows. Receptor for lutropin-choriogonadotropic hormone. The activity of this receptor is mediated by G proteins which activate adenylate cyclase. The sequence is that of Lutropin-choriogonadotropic hormone receptor (LHCGR) from Callithrix jacchus (White-tufted-ear marmoset).